A 500-amino-acid polypeptide reads, in one-letter code: MKVYGDKEVWLVTGSQHLYGPGVLKQVAENSQKIAAGLTESSLVSIKVVAQETVKSPGEILAVAQAANSNPNCVGLILWMHTFSPAKMWIGGLRALNKPYMHLHTQFNAELPFSDINMHFMNLNQSAHGDREFGHISTRLRQDRKVVVGHWATASVQQQIDSWCRVAMGWYESQNLKIARFGDNMRQVAVTEGDKVSAQIQFGYEVHAYGLGDLQKVVDAVTDEQVAAQIETYKKDYEVSPAIFDDEHQFQMLKNEARLELGMLKFLTDGGFGAFTNCFENLTGLTNLPGLATQRLMQQGFGYGGEGDWKTAAMVRIAKVMSKGREGGSSFMEDYTYHFGAVDQVLGAHMLEVCPSIAAAKPKLEVHLHTIGCRNDIARLIFTGKTGPALCISVIDMGTRFRMIINEVDTVNPPQELPQLPVAKALWEPRPNLEIAASAWIHAGGAHHSAYTQGITVDEAVDYAEMAGIEAVVIGADTTVRSFKTELRHNAAYYHLKDGV.

Mn(2+) contacts are provided by Glu306, Glu333, His349, and His448.

This sequence belongs to the arabinose isomerase family. Mn(2+) serves as cofactor.

It catalyses the reaction beta-L-arabinopyranose = L-ribulose. It functions in the pathway carbohydrate degradation; L-arabinose degradation via L-ribulose; D-xylulose 5-phosphate from L-arabinose (bacterial route): step 1/3. In terms of biological role, catalyzes the conversion of L-arabinose to L-ribulose. The chain is L-arabinose isomerase from Cellvibrio japonicus (strain Ueda107) (Pseudomonas fluorescens subsp. cellulosa).